A 142-amino-acid polypeptide reads, in one-letter code: Large ribosomal subunit protein uL13 (142 aa).

It belongs to the universal ribosomal protein uL13 family. As to quaternary structure, part of the 50S ribosomal subunit.

Its function is as follows. This protein is one of the early assembly proteins of the 50S ribosomal subunit, although it is not seen to bind rRNA by itself. It is important during the early stages of 50S assembly. This chain is Large ribosomal subunit protein uL13, found in Cellvibrio japonicus (strain Ueda107) (Pseudomonas fluorescens subsp. cellulosa).